A 346-amino-acid polypeptide reads, in one-letter code: Phenylalanine--tRNA ligase alpha subunit (346 aa).

Glutamate 260 contacts Mg(2+).

It belongs to the class-II aminoacyl-tRNA synthetase family. Phe-tRNA synthetase alpha subunit type 1 subfamily. Tetramer of two alpha and two beta subunits. Requires Mg(2+) as cofactor.

The protein resides in the cytoplasm. It carries out the reaction tRNA(Phe) + L-phenylalanine + ATP = L-phenylalanyl-tRNA(Phe) + AMP + diphosphate + H(+). In Herpetosiphon aurantiacus (strain ATCC 23779 / DSM 785 / 114-95), this protein is Phenylalanine--tRNA ligase alpha subunit.